The primary structure comprises 447 residues: Probable ribonuclease FAU-1 (447 aa).

Positions 424–447 (PEAPGGKICTPEGLTSAPPRSSSA) are disordered.

This sequence belongs to the FAU-1 family.

Probable RNase involved in rRNA stability through maturation and/or degradation of precursor rRNAs. Binds to RNA in loop regions with AU-rich sequences. The sequence is that of Probable ribonuclease FAU-1 from Pyrobaculum neutrophilum (strain DSM 2338 / JCM 9278 / NBRC 100436 / V24Sta) (Thermoproteus neutrophilus).